Consider the following 87-residue polypeptide: Apoptosis inducing factor BLCAP B (87 aa).

Helical transmembrane passes span 19–39 and 43–63; these read PALW…FLLE and CTIC…SCWG.

This sequence belongs to the BLCAP family.

It localises to the cytoplasm. Its subcellular location is the nucleus. The protein resides in the membrane. Its function is as follows. Acts as a tumor suppressor; induces growth arrest at G(1)/S checkpoint and apoptosis via RB1-dependent and p53/TP53- and NF-kappa-B-independent mechanisms. Modulates expression of genes involved in the regulation of proliferation, cell cycle and apoptosis. This chain is Apoptosis inducing factor BLCAP B (blcap-b), found in Xenopus laevis (African clawed frog).